A 149-amino-acid polypeptide reads, in one-letter code: Transcriptional repressor NrdR (149 aa).

A zinc finger lies at 3–34; that stretch reads CPFCFAVDTKVIDSRLVGEGSSVRRRRQCLVC. In terms of domain architecture, ATP-cone spans 49–139; that stretch reads PRVIKSNDVR…VYRSFEDIKD (91 aa).

The protein belongs to the NrdR family. The cofactor is Zn(2+).

Negatively regulates transcription of bacterial ribonucleotide reductase nrd genes and operons by binding to NrdR-boxes. This chain is Transcriptional repressor NrdR, found in Salmonella schwarzengrund (strain CVM19633).